Consider the following 229-residue polypeptide: Large ribosomal subunit protein uL4 (229 aa).

The tract at residues 62-103 is disordered; sequence SRRQGTHQVKNRAAVSGSGKKPWKQKGTGRARHSSRRSPIWV. A compositionally biased stretch (basic residues) spans 82 to 97; it reads KPWKQKGTGRARHSSR.

Belongs to the universal ribosomal protein uL4 family. As to quaternary structure, part of the 50S ribosomal subunit.

One of the primary rRNA binding proteins, this protein initially binds near the 5'-end of the 23S rRNA. It is important during the early stages of 50S assembly. It makes multiple contacts with different domains of the 23S rRNA in the assembled 50S subunit and ribosome. Functionally, forms part of the polypeptide exit tunnel. The polypeptide is Large ribosomal subunit protein uL4 (Mycoplasmopsis synoviae (strain 53) (Mycoplasma synoviae)).